We begin with the raw amino-acid sequence, 574 residues long: ATP-dependent lipid A-core flippase (574 aa).

The next 4 membrane-spanning stretches (helical) occupy residues 11 to 31, 60 to 80, 156 to 176, and 244 to 264; these read LLSY…GFGI, WFPL…FMGG, YTNW…GVLV, and LNSP…VWLA. The ABC transmembrane type-1 domain maps to 23–304; the sequence is LLVLVGFGIN…LTDVNEKLQR (282 aa). The region spanning 335 to 570 is the ABC transporter domain; sequence VRFDHVTLEY…QGAYFQLHQR (236 aa). 368–375 lines the ATP pocket; sequence GRSGAGKT.

Belongs to the ABC transporter superfamily. Lipid exporter (TC 3.A.1.106) family. In terms of assembly, homodimer.

The protein localises to the cell inner membrane. It carries out the reaction ATP + H2O + lipid A-core oligosaccharideSide 1 = ADP + phosphate + lipid A-core oligosaccharideSide 2.. In terms of biological role, involved in lipopolysaccharide (LPS) biosynthesis. Translocates lipid A-core from the inner to the outer leaflet of the inner membrane. Transmembrane domains (TMD) form a pore in the inner membrane and the ATP-binding domain (NBD) is responsible for energy generation. This is ATP-dependent lipid A-core flippase from Acinetobacter baylyi (strain ATCC 33305 / BD413 / ADP1).